We begin with the raw amino-acid sequence, 181 residues long: Cell division protein SepF (181 aa).

A compositionally biased stretch (acidic residues) spans 18 to 27 (EDYLDDDDYD). Residues 18–42 (EDYLDDDDYDDGRAVGHDDRRAMHE) are disordered. Over residues 28–42 (DGRAVGHDDRRAMHE) the composition is skewed to basic and acidic residues.

Belongs to the SepF family. In terms of assembly, homodimer. Interacts with FtsZ.

It is found in the cytoplasm. Functionally, cell division protein that is part of the divisome complex and is recruited early to the Z-ring. Probably stimulates Z-ring formation, perhaps through the cross-linking of FtsZ protofilaments. Its function overlaps with FtsA. The chain is Cell division protein SepF from Frankia alni (strain DSM 45986 / CECT 9034 / ACN14a).